The sequence spans 111 residues: 2Fe-2S ferredoxin (111 aa).

Residues 2–104 (PKIVILPHQD…DLVVEIPRYT (103 aa)) form the 2Fe-2S ferredoxin-type domain. Residues Cys42, Cys48, Cys51, and Cys87 each coordinate [2Fe-2S] cluster.

Belongs to the adrenodoxin/putidaredoxin family. [2Fe-2S] cluster is required as a cofactor.

Ferredoxin are iron-sulfur proteins that transfer electrons in a wide variety of metabolic reactions. Although the function of this ferredoxin is unknown it is probable that it has a role as a cellular electron transfer protein. Involved in the in vivo assembly of the Fe-S clusters in a wide variety of iron-sulfur proteins. This chain is 2Fe-2S ferredoxin (fdx), found in Escherichia coli O157:H7.